We begin with the raw amino-acid sequence, 648 residues long: DNA gyrase subunit B (648 aa).

In terms of domain architecture, Toprim spans 432 to 546; the sequence is RELFIVEGNS…YGFVYLAQPP (115 aa). Residues Glu-438, Asp-511, and Asp-513 each coordinate Mg(2+).

The protein belongs to the type II topoisomerase GyrB family. Heterotetramer, composed of two GyrA and two GyrB chains. In the heterotetramer, GyrA contains the active site tyrosine that forms a transient covalent intermediate with DNA, while GyrB binds cofactors and catalyzes ATP hydrolysis. Mg(2+) serves as cofactor. Mn(2+) is required as a cofactor. It depends on Ca(2+) as a cofactor.

It localises to the cytoplasm. The catalysed reaction is ATP-dependent breakage, passage and rejoining of double-stranded DNA.. Its function is as follows. A type II topoisomerase that negatively supercoils closed circular double-stranded (ds) DNA in an ATP-dependent manner to modulate DNA topology and maintain chromosomes in an underwound state. Negative supercoiling favors strand separation, and DNA replication, transcription, recombination and repair, all of which involve strand separation. Also able to catalyze the interconversion of other topological isomers of dsDNA rings, including catenanes and knotted rings. Type II topoisomerases break and join 2 DNA strands simultaneously in an ATP-dependent manner. The polypeptide is DNA gyrase subunit B (Metamycoplasma hominis (strain ATCC 23114 / DSM 25592 / NBRC 14850 / NCTC 10111 / PG21) (Mycoplasma hominis)).